The sequence spans 499 residues: Endoglucanase (499 aa).

A signal peptide spans 1-29 (MKRSISIFITCLLITLLTMGGMLASPASA). Residues His65, 69 to 70 (WY), Tyr96, and His131 each bind substrate. Residue Glu169 is the Proton donor of the active site. Tyr231 contributes to the substrate binding site. The active-site Nucleophile is the Glu257. Residues 263–264 (AS), Trp291, and 296–298 (KQE) each bind substrate. The CBM3 domain maps to 350 to 499 (QENGISVQYR…GKLIWGTEPN (150 aa)).

It belongs to the glycosyl hydrolase 5 (cellulase A) family.

The enzyme catalyses Endohydrolysis of (1-&gt;4)-beta-D-glucosidic linkages in cellulose, lichenin and cereal beta-D-glucans.. The polypeptide is Endoglucanase (bglC) (Bacillus subtilis).